Consider the following 462-residue polypeptide: Annexin A7 (462 aa).

The tract at residues 1-130 (MSYPPNQGYP…QGYPPQQGYP (130 aa)) is disordered. The segment at 7–131 (QGYPPQSNSP…GYPPQQGYPP (125 aa)) is 19 X 6 AA tandem repeats of Q-G-Y-P-P-Q. Low complexity predominate over residues 16–130 (PQPGQYGAPQ…QGYPPQQGYP (115 aa)). Annexin repeat units lie at residues 161 to 232 (HDCK…ALLT), 233 to 304 (EPAH…KLTE), 315 to 388 (MQVS…AIVT), and 392 to 462 (NPYG…DIIS).

This sequence belongs to the annexin family.

Functionally, calcium/phospholipid-binding protein which promotes membrane fusion and is involved in exocytosis. In Dictyostelium discoideum (Social amoeba), this protein is Annexin A7 (nxnA).